The sequence spans 1336 residues: Aldehyde oxidase 4 (1336 aa).

Positions 8–95 (DELIFFVNGK…GAAITTVEGV (88 aa)) constitute a 2Fe-2S ferredoxin-type domain. Cysteine 47, cysteine 52, cysteine 55, and cysteine 77 together coordinate [2Fe-2S] cluster. A Mo-molybdopterin-binding site is contributed by glutamine 116. Residues cysteine 117, cysteine 120, cysteine 152, and cysteine 154 each coordinate [2Fe-2S] cluster. Cysteine 154 lines the Mo-molybdopterin pocket. The 187-residue stretch at 237 to 423 (FQGKRTTWII…LSIFIPYTAQ (187 aa)) folds into the FAD-binding PCMH-type domain. FAD contacts are provided by residues 265 to 272 (LVMGNTTV), alanine 346, threonine 355, histidine 359, aspartate 368, and isoleucine 413. Residues 804–805 (AF), leucine 1045, 1086–1089 (GSMG), glutamine 1201, and leucine 1265 contribute to the Mo-molybdopterin site. Residue glutamate 1267 is the Proton acceptor; for azaheterocycle hydroxylase activity of the active site.

Belongs to the xanthine dehydrogenase family. As to quaternary structure, homodimer. [2Fe-2S] cluster serves as cofactor. It depends on FAD as a cofactor. The cofactor is Mo-molybdopterin. Highly expressed in Harderian glands and sebaceous glands with detectable levels in the epidermis and other keratinized epithelia (at protein level). Detected in testis. The expression is 3 times greater in females than in males.

The protein localises to the cytoplasm. It carries out the reaction an aldehyde + O2 + H2O = a carboxylate + H2O2 + H(+). The enzyme catalyses retinal + O2 + H2O = retinoate + H2O2 + H(+). The catalysed reaction is all-trans-retinal + O2 + H2O = all-trans-retinoate + H2O2 + H(+). In terms of biological role, aldehyde oxidase able to catalyze the oxidation of retinaldehyde into retinoate. Is responsible for the major all-trans-retinaldehyde-metabolizing activity in the Harderian gland, and contributes a significant amount of the same activity in the skin. Is devoid of pyridoxal-oxidizing activity, in contrast to the other aldehyde oxidases. Acts as a negative modulator of the epidermal trophism. May be able to oxidize a wide variety of aldehydes into their corresponding carboxylates and to hydroxylate azaheterocycles. This is Aldehyde oxidase 4 (Aox4) from Mus musculus (Mouse).